The following is a 155-amino-acid chain: Ribosome-binding factor A (155 aa).

Basic and acidic residues-rich tracts occupy residues 116 to 125 (ARQRDQEVAR) and 142 to 155 (SPHE…ADGW). A disordered region spans residues 116-155 (ARQRDQEVARQAEGATPAGDANPYKTSPHEGRPESEADGW).

The protein belongs to the RbfA family. Monomer. Binds 30S ribosomal subunits, but not 50S ribosomal subunits or 70S ribosomes.

It is found in the cytoplasm. One of several proteins that assist in the late maturation steps of the functional core of the 30S ribosomal subunit. Associates with free 30S ribosomal subunits (but not with 30S subunits that are part of 70S ribosomes or polysomes). Required for efficient processing of 16S rRNA. May interact with the 5'-terminal helix region of 16S rRNA. This chain is Ribosome-binding factor A, found in Corynebacterium kroppenstedtii (strain DSM 44385 / JCM 11950 / CIP 105744 / CCUG 35717).